Reading from the N-terminus, the 95-residue chain is Ribonuclease P protein component 1 (95 aa).

The protein belongs to the eukaryotic/archaeal RNase P protein component 1 family. In terms of assembly, consists of a catalytic RNA component and at least 4 protein subunits. Forms a subcomplex with Rnp4 which stimulates the catalytic RNA.

It localises to the cytoplasm. It carries out the reaction Endonucleolytic cleavage of RNA, removing 5'-extranucleotides from tRNA precursor.. Part of ribonuclease P, a protein complex that generates mature tRNA molecules by cleaving their 5'-ends. In Methanocaldococcus jannaschii (strain ATCC 43067 / DSM 2661 / JAL-1 / JCM 10045 / NBRC 100440) (Methanococcus jannaschii), this protein is Ribonuclease P protein component 1.